We begin with the raw amino-acid sequence, 291 residues long: Pyridoxal 5'-phosphate synthase subunit PdxS (291 aa).

Aspartate 23 is a binding site for D-ribose 5-phosphate. Lysine 80 serves as the catalytic Schiff-base intermediate with D-ribose 5-phosphate. Glycine 152 lines the D-ribose 5-phosphate pocket. Arginine 164 contributes to the D-glyceraldehyde 3-phosphate binding site. D-ribose 5-phosphate is bound by residues glycine 213 and 234 to 235; that span reads GS.

It belongs to the PdxS/SNZ family. As to quaternary structure, in the presence of PdxT, forms a dodecamer of heterodimers.

The catalysed reaction is aldehydo-D-ribose 5-phosphate + D-glyceraldehyde 3-phosphate + L-glutamine = pyridoxal 5'-phosphate + L-glutamate + phosphate + 3 H2O + H(+). The protein operates within cofactor biosynthesis; pyridoxal 5'-phosphate biosynthesis. Its function is as follows. Catalyzes the formation of pyridoxal 5'-phosphate from ribose 5-phosphate (RBP), glyceraldehyde 3-phosphate (G3P) and ammonia. The ammonia is provided by the PdxT subunit. Can also use ribulose 5-phosphate and dihydroxyacetone phosphate as substrates, resulting from enzyme-catalyzed isomerization of RBP and G3P, respectively. This chain is Pyridoxal 5'-phosphate synthase subunit PdxS, found in Haemophilus influenzae (strain PittGG).